A 739-amino-acid chain; its full sequence is Adhesion G protein-coupled receptor L4 (739 aa).

An N-terminal signal peptide occupies residues 1–19 (MRLLPLLVGFSTLLNCSYT). Residues 20–57 (QNCSKTTCLPNAKCEVHNGVEACFCSQGYSGNGVTICE) form the EGF-like 1 domain. Over 20–481 (QNCSKTTCLP…DYNILTRITQ (462 aa)) the chain is Extracellular. N-linked (GlcNAc...) asparagine glycosylation occurs at asparagine 21. 9 disulfide bridges follow: cysteine 22/cysteine 33, cysteine 27/cysteine 42, cysteine 44/cysteine 56, cysteine 62/cysteine 74, cysteine 68/cysteine 83, cysteine 85/cysteine 106, cysteine 112/cysteine 124, cysteine 118/cysteine 133, and cysteine 135/cysteine 156. Residues 58–107 (DIDECSESSVCGDHAVCENVNGGFSCFCREGYQTATGKSQFTPNDGSYCQ) form the EGF-like 2; calcium-binding domain. An EGF-like 3; calcium-binding domain is found at 108–157 (DIDECSESSVCGDHAVCENVNGGFSCFCREGYQTATGKSQFTPNDGSYCQ). N-linked (GlcNAc...) asparagine glycans are attached at residues asparagine 176, asparagine 226, asparagine 237, asparagine 298, asparagine 422, asparagine 430, and asparagine 444. The region spanning 293-468 (SQFDMNSTDL…AILMSSTSSI (176 aa)) is the GAIN-B domain. 2 disulfide bridges follow: cysteine 418–cysteine 450 and cysteine 438–cysteine 452. Residues 418 to 468 (CAFWNYSVDAMNNGSWSTEGCELTHSNDTHTSCRCSHLTHFAILMSSTSSI) form a GPS region. Residues 482 to 502 (LGIIISLICLAICIFTFWFFS) traverse the membrane as a helical segment. The Cytoplasmic segment spans residues 503 to 513 (EIQSTRTTIHK). A helical transmembrane segment spans residues 514–534 (NLCCSLFLAELVFLIGININT). The Extracellular portion of the chain corresponds to 535–548 (NKLVCSIIAGLLHY). A helical membrane pass occupies residues 549-569 (FFLAAFAWMCIEGIHLYLIVV). Over 570 to 581 (GVIYNKGFLHKN) the chain is Cytoplasmic. The chain crosses the membrane as a helical span at residues 582–602 (FYIFGYLSPAVVVGFSASLGY). Topologically, residues 603–622 (RYYGTTKVCWLSTENNFIWS) are extracellular. The chain crosses the membrane as a helical span at residues 623-643 (FIGPACLIILVNLLAFGVIIY). Topologically, residues 644–667 (KVFRHTAGLKPEVSCYENIRSCAR) are cytoplasmic. Residues 668–688 (GALALLFLLGTTWIFGVLHVV) form a helical membrane-spanning segment. Residues 689–695 (HASVVTA) are Extracellular-facing. Residues 696–716 (YLFTVSNAFQGMFIFLFLCVL) form a helical membrane-spanning segment. At 717–739 (SRKIQEEYYRLFKNVPCCFGCLR) the chain is on the cytoplasmic side.

It belongs to the G-protein coupled receptor 2 family. Adhesion G-protein coupled receptor (ADGR) subfamily. In terms of assembly, heterodimer of 2 chains generated by proteolytic processing; the large extracellular N-terminal fragment and the membrane-bound C-terminal fragment predominantly remain associated and non-covalently linked. Glycosylated. Post-translationally, proteolytically cleaved into 2 subunits, an extracellular alpha subunit and a seven-transmembrane subunit.

The protein localises to the cell membrane. Its function is as follows. Endothelial orphan receptor that acts as a key regulator of angiogenesis. This Mus musculus (Mouse) protein is Adhesion G protein-coupled receptor L4 (Adgrl4).